The chain runs to 619 residues: Enolase 4 (619 aa).

Over residues 173 to 184 the composition is skewed to basic and acidic residues; it reads DKERKELEKSQE. Positions 173–236 are disordered; it reads DKERKELEKS…PPEPPEPVLH (64 aa). Residues 188–206 are compositionally biased toward pro residues; sequence PAPPPVTLPPPPPPPPPPP. Glu302 contacts substrate. Positions 333 to 354 are disordered; that stretch reads TLPPPKQETKKGHNGSKRAQPP. Lys497 acts as the Proton acceptor in catalysis. Lys548 lines the substrate pocket.

Belongs to the enolase family. As to quaternary structure, interacts with ENO1. Isoform 1 and isoform 4 interact with AKAP4. Post-translationally, synthesized as an approximately 70-kDa precursor, which then undergoes proteolytic cleavage to an approximately 60-kDa enzyme; HOATZ associates directly or indirectly with ENO4 to mediate this process before its transport to mature flagella. Testis-specific. Expressed in spermatids and ependyma (at protein level). In terms of tissue distribution, expressed at higher levels in late spermatids than in pachytene spermatocytes. As to expression, expressed at higher levels in pachytene spermatocytes than in late spermatids.

The enzyme catalyses (2R)-2-phosphoglycerate = phosphoenolpyruvate + H2O. It functions in the pathway carbohydrate degradation; glycolysis; pyruvate from D-glyceraldehyde 3-phosphate: step 4/5. Its function is as follows. Required for sperm motility, function and male fertility. May be involved in the normal assembly of the sperm fibrous sheath and provides most of the enolase activity in sperm. In Mus musculus (Mouse), this protein is Enolase 4 (Eno4).